The chain runs to 122 residues: Large ribosomal subunit protein uL14c (122 aa).

This sequence belongs to the universal ribosomal protein uL14 family. Part of the 50S ribosomal subunit.

It is found in the plastid. The protein resides in the chloroplast. In terms of biological role, binds to 23S rRNA. The protein is Large ribosomal subunit protein uL14c of Phalaenopsis aphrodite subsp. formosana (Moth orchid).